The chain runs to 443 residues: Xaa-Pro dipeptidase (443 aa).

Mn(2+) contacts are provided by Asp246, Asp257, His339, Glu384, and Glu423.

It belongs to the peptidase M24B family. Bacterial-type prolidase subfamily. Mn(2+) serves as cofactor.

It carries out the reaction Xaa-L-Pro dipeptide + H2O = an L-alpha-amino acid + L-proline. Splits dipeptides with a prolyl residue in the C-terminal position. The polypeptide is Xaa-Pro dipeptidase (Serratia proteamaculans (strain 568)).